A 366-amino-acid polypeptide reads, in one-letter code: tRNA(Met) cytidine acetate ligase (366 aa).

ATP-binding positions include 7 to 20 (IAEF…HKYL), Gly-96, Asn-152, and Arg-175.

It belongs to the TmcAL family.

It is found in the cytoplasm. The enzyme catalyses cytidine(34) in elongator tRNA(Met) + acetate + ATP = N(4)-acetylcytidine(34) in elongator tRNA(Met) + AMP + diphosphate. In terms of biological role, catalyzes the formation of N(4)-acetylcytidine (ac(4)C) at the wobble position of elongator tRNA(Met), using acetate and ATP as substrates. First activates an acetate ion to form acetyladenylate (Ac-AMP) and then transfers the acetyl group to tRNA to form ac(4)C34. This chain is tRNA(Met) cytidine acetate ligase, found in Streptococcus mutans serotype c (strain ATCC 700610 / UA159).